We begin with the raw amino-acid sequence, 193 residues long: Peptidyl-tRNA hydrolase (193 aa).

Tyrosine 16 is a tRNA binding site. The active-site Proton acceptor is the histidine 21. TRNA-binding residues include phenylalanine 67, asparagine 69, and asparagine 115.

The protein belongs to the PTH family. Monomer.

The protein resides in the cytoplasm. It catalyses the reaction an N-acyl-L-alpha-aminoacyl-tRNA + H2O = an N-acyl-L-amino acid + a tRNA + H(+). Its function is as follows. Hydrolyzes ribosome-free peptidyl-tRNAs (with 1 or more amino acids incorporated), which drop off the ribosome during protein synthesis, or as a result of ribosome stalling. In terms of biological role, catalyzes the release of premature peptidyl moieties from peptidyl-tRNA molecules trapped in stalled 50S ribosomal subunits, and thus maintains levels of free tRNAs and 50S ribosomes. The sequence is that of Peptidyl-tRNA hydrolase from Psychrobacter cryohalolentis (strain ATCC BAA-1226 / DSM 17306 / VKM B-2378 / K5).